Reading from the N-terminus, the 189-residue chain is MEIKKLEAMIEAILFTMGEAVEVERIASALDHDVDTIRKIIHNMMDRYEGDERGIKIIELDNSFQMCTKAQMYEAIVKIAHVPKKHILTDVLLESLSIIAYKQPITKQQIESIRGVKSDHAVNKLVEYNLVCEVGRMDAPGRPILFGTTEDFLRNFGIASLEDLPVVAPEKVADFKMEAEEEVQLQLDI.

The protein belongs to the ScpB family. As to quaternary structure, homodimer. Homodimerization may be required to stabilize the binding of ScpA to the Smc head domains. Component of a cohesin-like complex composed of ScpA, ScpB and the Smc homodimer, in which ScpA and ScpB bind to the head domain of Smc. The presence of the three proteins is required for the association of the complex with DNA.

Its subcellular location is the cytoplasm. Functionally, participates in chromosomal partition during cell division. May act via the formation of a condensin-like complex containing Smc and ScpA that pull DNA away from mid-cell into both cell halves. The polypeptide is Segregation and condensation protein B (Lachnoclostridium phytofermentans (strain ATCC 700394 / DSM 18823 / ISDg) (Clostridium phytofermentans)).